The sequence spans 844 residues: Eukaryotic translation elongation factor 2 (844 aa).

The tr-type G domain maps to 17–348; it reads RNIRNMSVIA…MIAIHLPSPV (332 aa). Residue 26–33 coordinates GTP; it reads AHVDHGKS. 2 positions are modified to phosphothreonine: threonine 57 and threonine 59. Residues 162–165 and 219–221 each bind GTP; these read NKMD and SGL. Histidine 701 is subject to Diphthamide.

The protein belongs to the TRAFAC class translation factor GTPase superfamily. Classic translation factor GTPase family. EF-G/EF-2 subfamily. In terms of processing, phosphorylation by EF-2 kinase completely inactivates eEF2.

The protein resides in the cytoplasm. It carries out the reaction GTP + H2O = GDP + phosphate + H(+). In terms of biological role, catalyzes the GTP-dependent ribosomal translocation step during translation elongation. During this step, the ribosome changes from the pre-translocational (PRE) to the post-translocational (POST) state as the newly formed A-site-bound peptidyl-tRNA and P-site-bound deacylated tRNA move to the P and E sites, respectively. Catalyzes the coordinated movement of the two tRNA molecules, the mRNA and conformational changes in the ribosome. The chain is Eukaryotic translation elongation factor 2 from Drosophila melanogaster (Fruit fly).